The primary structure comprises 412 residues: Dihydrolipoyllysine-residue acetyltransferase component of pyruvate dehydrogenase complex (412 aa).

In terms of domain architecture, Lipoyl-binding spans 2-78 (PIKILMPALS…PVNSLIAVLS (77 aa)). K43 carries the post-translational modification N6-lipoyllysine. One can recognise a Peripheral subunit-binding (PSBD) domain in the interval 132–169 (FASPLAKRLAKMRNIRFESVKGSGPHGRIVKQDILSYT). H385 is a catalytic residue.

Belongs to the 2-oxoacid dehydrogenase family. In terms of assembly, forms a 24-polypeptide structural core with octahedral symmetry. Requires (R)-lipoate as cofactor.

It catalyses the reaction N(6)-[(R)-dihydrolipoyl]-L-lysyl-[protein] + acetyl-CoA = N(6)-[(R)-S(8)-acetyldihydrolipoyl]-L-lysyl-[protein] + CoA. The pyruvate dehydrogenase complex catalyzes the overall conversion of pyruvate to acetyl-CoA and CO(2). It contains multiple copies of three enzymatic components: pyruvate dehydrogenase (E1), dihydrolipoamide acetyltransferase (E2) and lipoamide dehydrogenase (E3). In Rickettsia conorii (strain ATCC VR-613 / Malish 7), this protein is Dihydrolipoyllysine-residue acetyltransferase component of pyruvate dehydrogenase complex (pdhC).